The chain runs to 208 residues: Ypt/Rab-type GTPase ypt71 (208 aa).

GTP contacts are provided by residues Ser-17–Cys-23, Phe-33–Thr-40, Gly-66, Asn-124–Asp-127, and Ser-158–Lys-160. The Effector region signature appears at Tyr-37–Phe-45. 2 S-geranylgeranyl cysteine lipidation sites follow: Cys-206 and Cys-208. Residue Cys-208 is modified to Cysteine methyl ester.

The protein belongs to the small GTPase superfamily. Rab family.

The protein resides in the vacuole membrane. Its activity is regulated as follows. Rab activation is generally mediated by a guanine exchange factor (GEF), while inactivation through hydrolysis of bound GTP is catalyzed by a GTPase activating protein (GAP). Ypt/Rab-type GTPases are key regulators of membrane trafficking and intracellular vesicular transport. They act as molecular switches that convert between GTP-bound and GDP-bound states, and regulate virtually all steps of membrane traffic from the formation of the transport vesicle at the donor membrane to its fusion at the target membrane. In the GDP-bound state, Ypt proteins are predominantly cytosolic, solubilized through the interaction with a GDP dissociation inhibitor (GDI). In the GTP-bound state, the proteins are membrane bound and interact with specific effector proteins that select cargo, promote vesicle movement, or verify the correct site of fusion. Act antagonistically to ypt7 in regulating vacuolar morphology, promoting vacuolar fission. This chain is Ypt/Rab-type GTPase ypt71 (ypt71), found in Schizosaccharomyces pombe (strain 972 / ATCC 24843) (Fission yeast).